The sequence spans 966 residues: Alpha-1,4 glucan phosphorylase L-1 isozyme, chloroplastic/amyloplastic (966 aa).

A chloroplast-targeting transit peptide spans 1 to 50 (MATANGAHLFNHYSSNSRFIHFTSRNTSSKLFLTKTSHFRRPKRCFHVNN). K812 carries the post-translational modification N6-(pyridoxal phosphate)lysine.

This sequence belongs to the glycogen phosphorylase family. Requires pyridoxal 5'-phosphate as cofactor. As to expression, tuber.

The protein localises to the plastid. It localises to the chloroplast. It is found in the amyloplast. It carries out the reaction [(1-&gt;4)-alpha-D-glucosyl](n) + phosphate = [(1-&gt;4)-alpha-D-glucosyl](n-1) + alpha-D-glucose 1-phosphate. Its function is as follows. Phosphorylase is an important allosteric enzyme in carbohydrate metabolism. Enzymes from different sources differ in their regulatory mechanisms and in their natural substrates. However, all known phosphorylases share catalytic and structural properties. This is Alpha-1,4 glucan phosphorylase L-1 isozyme, chloroplastic/amyloplastic from Solanum tuberosum (Potato).